The sequence spans 231 residues: Biosynthetic peptidoglycan transglycosylase (231 aa).

Residues Ala-12–Pro-34 traverse the membrane as a helical segment.

It belongs to the glycosyltransferase 51 family.

It is found in the cell inner membrane. It catalyses the reaction [GlcNAc-(1-&gt;4)-Mur2Ac(oyl-L-Ala-gamma-D-Glu-L-Lys-D-Ala-D-Ala)](n)-di-trans,octa-cis-undecaprenyl diphosphate + beta-D-GlcNAc-(1-&gt;4)-Mur2Ac(oyl-L-Ala-gamma-D-Glu-L-Lys-D-Ala-D-Ala)-di-trans,octa-cis-undecaprenyl diphosphate = [GlcNAc-(1-&gt;4)-Mur2Ac(oyl-L-Ala-gamma-D-Glu-L-Lys-D-Ala-D-Ala)](n+1)-di-trans,octa-cis-undecaprenyl diphosphate + di-trans,octa-cis-undecaprenyl diphosphate + H(+). It participates in cell wall biogenesis; peptidoglycan biosynthesis. Functionally, peptidoglycan polymerase that catalyzes glycan chain elongation from lipid-linked precursors. The chain is Biosynthetic peptidoglycan transglycosylase from Rhodospirillum centenum (strain ATCC 51521 / SW).